The sequence spans 152 residues: Catabolic 3-dehydroquinase (152 aa).

Residue Tyr24 is the Proton acceptor of the active site. Substrate is bound by residues Asn75, His81, and Asp88. The active-site Proton donor is the His101. Substrate-binding positions include 102–103 (IS) and Arg112.

It belongs to the type-II 3-dehydroquinase family. As to quaternary structure, homododecamer. Adopts a ring-like structure, composed of an arrangement of two hexameric rings stacked on top of one another.

It catalyses the reaction 3-dehydroquinate = 3-dehydroshikimate + H2O. It functions in the pathway aromatic compound metabolism; 3,4-dihydroxybenzoate biosynthesis; 3,4-dihydroxybenzoate from 3-dehydroquinate: step 1/2. Is involved in the catabolism of quinate. Allows the utilization of quinate as carbon source via the beta-ketoadipate pathway. This chain is Catabolic 3-dehydroquinase, found in Phaeosphaeria nodorum (strain SN15 / ATCC MYA-4574 / FGSC 10173) (Glume blotch fungus).